The chain runs to 1040 residues: Isoleucine--tRNA ligase (1040 aa).

The 'HIGH' region motif lies at 47–57 (PYCSGSIHLGT). Positions 605–609 (KMSKS) match the 'KMSKS' region motif. Position 608 (K608) interacts with ATP.

Belongs to the class-I aminoacyl-tRNA synthetase family. IleS type 2 subfamily. As to quaternary structure, monomer. The cofactor is Zn(2+).

It localises to the cytoplasm. It carries out the reaction tRNA(Ile) + L-isoleucine + ATP = L-isoleucyl-tRNA(Ile) + AMP + diphosphate. Its function is as follows. Catalyzes the attachment of isoleucine to tRNA(Ile). As IleRS can inadvertently accommodate and process structurally similar amino acids such as valine, to avoid such errors it has two additional distinct tRNA(Ile)-dependent editing activities. One activity is designated as 'pretransfer' editing and involves the hydrolysis of activated Val-AMP. The other activity is designated 'posttransfer' editing and involves deacylation of mischarged Val-tRNA(Ile). This chain is Isoleucine--tRNA ligase, found in Methanococcus aeolicus (strain ATCC BAA-1280 / DSM 17508 / OCM 812 / Nankai-3).